The following is an 88-amino-acid chain: Small ribosomal subunit protein uS15 (88 aa).

The protein belongs to the universal ribosomal protein uS15 family. Part of the 30S ribosomal subunit. Forms a bridge to the 50S subunit in the 70S ribosome, contacting the 23S rRNA.

Functionally, one of the primary rRNA binding proteins, it binds directly to 16S rRNA where it helps nucleate assembly of the platform of the 30S subunit by binding and bridging several RNA helices of the 16S rRNA. In terms of biological role, forms an intersubunit bridge (bridge B4) with the 23S rRNA of the 50S subunit in the ribosome. The polypeptide is Small ribosomal subunit protein uS15 (Methylacidiphilum infernorum (isolate V4) (Methylokorus infernorum (strain V4))).